The chain runs to 505 residues: Buccalin (505 aa).

An N-terminal signal peptide occupies residues 1-25 (MAHHRGHRHILLYVSLALSLGLALA). The propeptide occupies 26-62 (EDATDPSDDTGSFDDVEAVSEEADLDPYSMSQELNKR). Val-74 is subject to Valine amide. Leucine amide is present on residues Leu-88 and Leu-102. Gln-106 carries the post-translational modification Pyrrolidone carboxylic acid. Residue Ile-116 is modified to Isoleucine amide. A leucine amide mark is found at Leu-129, Leu-143, Leu-157, Leu-171, Leu-185, Leu-199, Leu-213, Leu-227, Leu-241, Leu-254, Leu-267, Leu-281, Leu-294, Leu-307, Leu-321, and Leu-335. Glu-349 carries the glutamic acid 1-amide modification. Leucine amide occurs at positions 363, 377, 391, 405, 419, and 433. 2 positions are modified to isoleucine amide: Ile-447 and Ile-461. A Pyrrolidone carboxylic acid modification is found at Gln-465. The disordered stretch occupies residues 472-505 (SGRLGKRSSSEQEEEDVRQVEKRSTTEEQSSKSL). Residue Leu-475 is modified to Leucine amide. Residues 488-505 (VRQVEKRSTTEEQSSKSL) are compositionally biased toward basic and acidic residues. Positions 495–505 (STTEEQSSKSL) are excised as a propeptide.

Cholinergic motor neuron B15 innervating buccal muscles in Aplysia.

It is found in the secreted. Modulatory neuropeptide, acting presynaptically on nerve terminals to inhibit acetylcholine release. The polypeptide is Buccalin (Aplysia californica (California sea hare)).